A 290-amino-acid polypeptide reads, in one-letter code: Endoplasmic reticulum-Golgi intermediate compartment protein 1 (290 aa).

Topologically, residues 1 to 26 are cytoplasmic; sequence MPFDFRRFDIYRKVPKDLTQPTYTGA. The helical transmembrane segment at 27–47 threads the bilayer; that stretch reads IISICCCLFITFLFLSELTGF. Residues 48–254 are Lumenal-facing; that stretch reads IANEIVNELY…RRQPMYRFIT (207 aa). N74 carries an N-linked (GlcNAc...) asparagine glycan. Residues 255–275 traverse the membrane as a helical segment; sequence TVCAIIGGTFTVAGILDSFIF. At 276–290 the chain is on the cytoplasmic side; it reads TASEAWKKIQLGKMQ.

It belongs to the ERGIC family.

It is found in the endoplasmic reticulum membrane. The protein resides in the endoplasmic reticulum-Golgi intermediate compartment membrane. It localises to the golgi apparatus membrane. Its function is as follows. Possible role in transport between endoplasmic reticulum and Golgi. In Xenopus laevis (African clawed frog), this protein is Endoplasmic reticulum-Golgi intermediate compartment protein 1 (ergic1).